We begin with the raw amino-acid sequence, 335 residues long: tRNA N6-adenosine threonylcarbamoyltransferase (335 aa).

Fe cation-binding residues include His111 and His115. Residues 133–137 (LISGG), Asp166, Gly179, and Asn276 each bind substrate. A Fe cation-binding site is contributed by Asp301.

This sequence belongs to the KAE1 / TsaD family. It depends on Fe(2+) as a cofactor.

It is found in the cytoplasm. It catalyses the reaction L-threonylcarbamoyladenylate + adenosine(37) in tRNA = N(6)-L-threonylcarbamoyladenosine(37) in tRNA + AMP + H(+). Its function is as follows. Required for the formation of a threonylcarbamoyl group on adenosine at position 37 (t(6)A37) in tRNAs that read codons beginning with adenine. Is involved in the transfer of the threonylcarbamoyl moiety of threonylcarbamoyl-AMP (TC-AMP) to the N6 group of A37, together with TsaE and TsaB. TsaD likely plays a direct catalytic role in this reaction. This Wolbachia pipientis wMel protein is tRNA N6-adenosine threonylcarbamoyltransferase.